Here is a 506-residue protein sequence, read N- to C-terminus: RNA-splicing ligase RtcB homolog (506 aa).

Residues D120, C123, H228, H260, and H354 each contribute to the Mn(2+) site. Position 227-231 (227-231 (NHYAE)) interacts with GMP. GMP is bound by residues 354 to 355 (HN), 403 to 406 (GGTM), S410, 429 to 432 (HGAG), and K505. H429 functions as the GMP-histidine intermediate in the catalytic mechanism.

Belongs to the RtcB family. In terms of assembly, catalytic component of the tRNA-splicing ligase complex. Mn(2+) serves as cofactor.

The catalysed reaction is a 3'-end 3'-phospho-ribonucleotide-RNA + a 5'-end dephospho-ribonucleoside-RNA + GTP = a ribonucleotidyl-ribonucleotide-RNA + GMP + diphosphate. It carries out the reaction a 3'-end 2',3'-cyclophospho-ribonucleotide-RNA + a 5'-end dephospho-ribonucleoside-RNA + GTP + H2O = a ribonucleotidyl-ribonucleotide-RNA + GMP + diphosphate + H(+). Catalytic subunit of the tRNA-splicing ligase complex that acts by directly joining spliced tRNA halves to mature-sized tRNAs by incorporating the precursor-derived splice junction phosphate into the mature tRNA as a canonical 3',5'-phosphodiester. May act as an RNA ligase with broad substrate specificity, and may function toward other RNAs. The chain is RNA-splicing ligase RtcB homolog from Plasmodium falciparum (isolate 3D7).